A 429-amino-acid chain; its full sequence is Putative zinc metalloprotease aq_1964 (429 aa).

His-17 is a Zn(2+) binding site. Residue Glu-18 is part of the active site. His-21 provides a ligand contact to Zn(2+). A helical transmembrane segment spans residues 88-110; the sequence is ILIALGGPLFNFLFTILVFALVY. Residues 189–265 form the PDZ domain; it reads TIKVPNVQKG…AIKLKILRNG (77 aa). The next 2 helical transmembrane spans lie at 369–391 and 406–428; these read IFNL…IEWL and RVGL…LRLL.

This sequence belongs to the peptidase M50B family. Zn(2+) serves as cofactor.

The protein resides in the cell inner membrane. The sequence is that of Putative zinc metalloprotease aq_1964 from Aquifex aeolicus (strain VF5).